The primary structure comprises 860 residues: Tetratricopeptide repeat protein 13 (860 aa).

TPR repeat units lie at residues 143–176 (TNEE…EPDL), 216–248 (PEVF…LQPS), 249–282 (ARLY…NKNQ), 284–316 (IAML…KVDF), 317–350 (IDAY…NQNH), 352–384 (QTLQ…EPYN), and 386–418 (VCQY…DPLP).

This chain is Tetratricopeptide repeat protein 13 (TTC13), found in Homo sapiens (Human).